A 365-amino-acid polypeptide reads, in one-letter code: Alanine racemase (365 aa).

K35 serves as the catalytic Proton acceptor; specific for D-alanine. The residue at position 35 (K35) is an N6-(pyridoxal phosphate)lysine. R130 contacts substrate. The active-site Proton acceptor; specific for L-alanine is Y256. A substrate-binding site is contributed by M304.

Belongs to the alanine racemase family. It depends on pyridoxal 5'-phosphate as a cofactor.

It catalyses the reaction L-alanine = D-alanine. The protein operates within amino-acid biosynthesis; D-alanine biosynthesis; D-alanine from L-alanine: step 1/1. Functionally, catalyzes the interconversion of L-alanine and D-alanine. May also act on other amino acids. In Acidovorax sp. (strain JS42), this protein is Alanine racemase (alr).